Consider the following 490-residue polypeptide: 7-ethoxycoumarin O-deethylase (490 aa).

Cysteine 432 is a binding site for heme.

Belongs to the cytochrome P450 family. Requires heme as cofactor.

Functionally, capable of dealkylating a model xenobiotic compound, 7-ethoxycoumarin. Metabolizes with high efficiency a wide range of xenobiotics, including alkoxycoumarins, alkoxyresorufins, and several herbicides of the class of phenylureas. Catalyzes the double N-dealkylation (oxidative N-demethylation) of phenylureas such as chlortoluron and isoproturon with turnover rates comparable to those reported for physiological substrates and produces non-phytotoxic compounds. Could be used for control of herbicide tolerance and selectivity, as well as soil and groundwater bioremediation. This is 7-ethoxycoumarin O-deethylase (CYP76B1) from Helianthus tuberosus (Jerusalem artichoke).